A 406-amino-acid polypeptide reads, in one-letter code: Peptidase T (406 aa).

H81 serves as a coordination point for Zn(2+). D83 is a catalytic residue. Zn(2+) is bound at residue D142. The active-site Proton acceptor is E176. E177, D199, and H381 together coordinate Zn(2+).

It belongs to the peptidase M20B family. The cofactor is Zn(2+).

Its subcellular location is the cytoplasm. The enzyme catalyses Release of the N-terminal residue from a tripeptide.. Its function is as follows. Cleaves the N-terminal amino acid of tripeptides. This is Peptidase T from Streptococcus suis (strain 98HAH33).